The chain runs to 93 residues: Secretoglobin family 3A member 2 (93 aa).

An N-terminal signal peptide occupies residues 1–21 (MKLVTIFLLVTISLCSYSATA).

It belongs to the secretoglobin family. UGRP subfamily. As to quaternary structure, homodimer; disulfide-linked. Monomer. Interacts with APOA1. Highly expressed in lung and trachea. Detected throughout the airway epithelium in lung, with slightly higher expression in large airways. Found in lung submucosal gland acinus where it localizes to serous-like cells. Probably expressed in club cells of the bronchioles. Not detected in other tissues tested.

The protein resides in the secreted. Secreted cytokine-like protein. Binds to the scavenger receptor MARCO. Can also bind to pathogens including the Gram-positive bacterium L.monocytogenes, the Gram-negative bacterium P.aeruginosa, and yeast. Strongly inhibits phospholipase A2 (PLA2G1B) activity. Seems to have anti-inflammatory effects in respiratory epithelium. Also has anti-fibrotic activity in lung. May play a role in fetal lung development and maturation. Promotes branching morphogenesis during early stages of lung development. In the pituitary, may inhibit production of follicle-stimulating hormone (FSH) and luteinizing hormone (LH). The sequence is that of Secretoglobin family 3A member 2 (SCGB3A2) from Homo sapiens (Human).